An 86-amino-acid polypeptide reads, in one-letter code: Large ribosomal subunit protein uL23 (86 aa).

This sequence belongs to the universal ribosomal protein uL23 family. In terms of assembly, part of the 50S ribosomal subunit. Contacts protein L29.

Its function is as follows. Binds to 23S rRNA. One of the proteins that surrounds the polypeptide exit tunnel on the outside of the ribosome. In Pyrococcus abyssi (strain GE5 / Orsay), this protein is Large ribosomal subunit protein uL23.